The following is a 364-amino-acid chain: Methylthioribose-1-phosphate isomerase (364 aa).

The Proton donor role is filled by Asp254.

The protein belongs to the eIF-2B alpha/beta/delta subunits family. MtnA subfamily.

The protein localises to the cytoplasm. Its subcellular location is the nucleus. It carries out the reaction 5-(methylsulfanyl)-alpha-D-ribose 1-phosphate = 5-(methylsulfanyl)-D-ribulose 1-phosphate. It functions in the pathway amino-acid biosynthesis; L-methionine biosynthesis via salvage pathway; L-methionine from S-methyl-5-thio-alpha-D-ribose 1-phosphate: step 1/6. Its function is as follows. Catalyzes the interconversion of methylthioribose-1-phosphate (MTR-1-P) into methylthioribulose-1-phosphate (MTRu-1-P). This is Methylthioribose-1-phosphate isomerase from Drosophila ananassae (Fruit fly).